A 223-amino-acid chain; its full sequence is Small ribosomal subunit protein uS3 (223 aa).

The region spanning 39–107 (VREFLKQKLK…PVQVSVEEIR (69 aa)) is the KH type-2 domain.

It belongs to the universal ribosomal protein uS3 family. In terms of assembly, part of the 30S ribosomal subunit. Forms a tight complex with proteins S10 and S14.

Its function is as follows. Binds the lower part of the 30S subunit head. Binds mRNA in the 70S ribosome, positioning it for translation. The sequence is that of Small ribosomal subunit protein uS3 from Methylococcus capsulatus (strain ATCC 33009 / NCIMB 11132 / Bath).